A 468-amino-acid chain; its full sequence is GTPase Der (468 aa).

EngA-type G domains lie at 3-169 and 199-372; these read PVMA…SPPD and IRLA…KAAT. GTP is bound by residues 9–16, 56–60, 119–122, 205–212, 252–256, and 317–320; these read GRANVGKS, DTGGF, NKAE, GRPNVGKS, DTAGL, and NKWD. Residues 373-457 form the KH-like domain; it reads CKMSTPVLTR…PLRIELKTSH (85 aa).

The protein belongs to the TRAFAC class TrmE-Era-EngA-EngB-Septin-like GTPase superfamily. EngA (Der) GTPase family. As to quaternary structure, associates with the 50S ribosomal subunit.

GTPase that plays an essential role in the late steps of ribosome biogenesis. The protein is GTPase Der of Verminephrobacter eiseniae (strain EF01-2).